Reading from the N-terminus, the 306-residue chain is RNA-binding protein Raly (306 aa).

Position 2 is an N-acetylserine (Ser2). Lys4 is covalently cross-linked (Glycyl lysine isopeptide (Lys-Gly) (interchain with G-Cter in SUMO2)). An RRM domain is found at 21–92; it reads SRVFIGNLNT…QTLDINMAGE (72 aa). Position 44 is an N6-acetyllysine (Lys44). Ser63 is modified (phosphoserine). Residues Lys94 and Lys99 each participate in a glycyl lysine isopeptide (Lys-Gly) (interchain with G-Cter in SUMO2) cross-link. Residues Ser106 and Ser135 each carry the phosphoserine modification. Residue Lys159 forms a Glycyl lysine isopeptide (Lys-Gly) (interchain with G-Cter in SUMO2) linkage. Lys165 bears the N6-acetyllysine; alternate mark. Lys165 participates in a covalent cross-link: Glycyl lysine isopeptide (Lys-Gly) (interchain with G-Cter in SUMO2); alternate. Glycyl lysine isopeptide (Lys-Gly) (interchain with G-Cter in SUMO2) cross-links involve residues Lys179 and Lys191. Residues 183–216 are a coiled coil; sequence KSSELQAIKTELTQIKSNIDALLSRLEQIAAEQK. Residues 215 to 306 are disordered; it reads QKANPDGKKK…DTDADDGALQ (92 aa). Basic and acidic residues predominate over residues 217 to 226; sequence ANPDGKKKGD. A compositionally biased stretch (gly residues) spans 227-252; it reads GGGAGGGGGGGGSGGGGSGGGGGGGS. The segment at 227–253 is epitope (recognized by BKRF1 antibodies); the sequence is GGGAGGGGGGGGSGGGGSGGGGGGGSS. Phosphothreonine is present on Thr262. Position 264 is a phosphoserine (Ser264). Thr286 carries the post-translational modification Phosphothreonine. A compositionally biased stretch (basic and acidic residues) spans 287–297; the sequence is HSEEELEHSQD. A phosphoserine mark is found at Ser288 and Ser295. Phosphothreonine is present on Thr298.

It belongs to the RRM HNRPC family. RALY subfamily. In terms of assembly, identified in the spliceosome C complex. Interacts (through its RNA-binding domain) with FUS (through its RNA-binding domain); both are components of the same RNPs. Expressed in heart, brain, lung, liver, skeletal muscle, kidney and pancreas. Weakly expressed in placenta.

It is found in the nucleus. Its function is as follows. RNA-binding protein that acts as a transcriptional cofactor for cholesterol biosynthetic genes in the liver. Binds the lipid-responsive non-coding RNA LeXis and is required for LeXis-mediated effect on cholesterogenesis. May be a heterogeneous nuclear ribonucleoprotein (hnRNP). The protein is RNA-binding protein Raly (RALY) of Homo sapiens (Human).